A 24-amino-acid polypeptide reads, in one-letter code: Brevinin-1Bc (24 aa).

Cys18 and Cys24 form a disulfide bridge.

Expressed by the skin glands.

It is found in the secreted. Antibacterial activity against Gram-positive bacterium S.aureus. This is Brevinin-1Bc from Lithobates berlandieri (Rio Grande leopard frog).